The sequence spans 137 residues: Acidic phospholipase A2 beta-bungarotoxin A chain (137 aa).

Positions 1–9 (AVCVSLLGA) are cleaved as a signal peptide. Residues 10-17 (ANIPPHPL) constitute a propeptide that is removed on maturation. 6 cysteine pairs are disulfide-bonded: C44–C136, C46–C62, C61–C117, C68–C110, C78–C103, and C96–C108. The Ca(2+) site is built by Y45, G47, and G49. Residue H65 is part of the active site. Residue D66 coordinates Ca(2+). The active site involves D111.

It belongs to the phospholipase A2 family. Group I subfamily. D49 sub-subfamily. In terms of assembly, heterodimer; disulfide-linked. The A chain has phospholipase A2 activity and the B chain shows homology with the basic protease inhibitors. Ca(2+) is required as a cofactor. As to expression, expressed by the venom gland.

Its subcellular location is the secreted. The enzyme catalyses a 1,2-diacyl-sn-glycero-3-phosphocholine + H2O = a 1-acyl-sn-glycero-3-phosphocholine + a fatty acid + H(+). In terms of biological role, beta bungarotoxin is a presynaptic neurotoxin. The A chain has phospholipase activity. PLA2 catalyzes the calcium-dependent hydrolysis of the 2-acyl groups in 3-sn-phosphoglycerides. The polypeptide is Acidic phospholipase A2 beta-bungarotoxin A chain (Bungarus candidus (Malayan krait)).